Consider the following 642-residue polypeptide: Influenza virus NS1A-binding protein (642 aa).

One can recognise a BTB domain in the interval 1-131 (MIPNGYLMFE…GDYLLSRMDV (131 aa)). The BACK domain maps to 132–350 (TSCISYRNFA…MQQDELIEKP (219 aa)). The segment at 164–368 (ISEEEEFLKL…SGLGTAEMNG (205 aa)) is sufficient for AHR interaction and signaling. Serine 246, serine 277, serine 322, serine 336, and serine 338 each carry phosphoserine. The tract at residues 257-281 (KPPRENGHKQISSSSTGCLSSPNAT) is disordered. Positions 265–281 (KQISSSSTGCLSSPNAT) are enriched in polar residues. Kelch repeat units lie at residues 384–421 (TVEC…YVVG), 432–469 (CGEM…YIVG), 481–518 (NCDV…YIIG), 527–565 (NTVE…FVCG), 575–612 (CVEM…YAVG), and 622–642 (TVEV…IFQF).

It belongs to the BTB-kelch protein family. In terms of assembly, homodimer; through the BTB domain. Interacts with AHR/Aryl hydrocarbon receptor. Interacts (via BACK domain) with pre-mRNA-binding protein HNRNPK; the interaction is direct. Interacts (via BACK domain) with splicing factor PTBP1; the interaction is direct. Interacts (via Kelch repeats) with RNA polymerase POLR2A (via C-terminal domain). Interacts (via BACK domain) with splicing factor SNRPA; the interaction is indirect. Interacts (via Kelch repeats) with splicing factor SART1. Interacts (via BACK domain) with ALYREF; the interaction is indirect and likely plays a role in mRNA nuclear export. Interacts (via Kelch repeats) with KLHL20 (via Kelch repeats); this interaction blocks the assembly of Cul3-KLHL20 complex. (Microbial infection) Interacts (via BACK domain) with influenza A virus non-structural protein 1 (NS1); the interaction is direct and bridges the interaction between NS1 and HNRNPK.

It localises to the cytoplasm. The protein resides in the cytoskeleton. Its subcellular location is the nucleus. It is found in the nucleoplasm. Its function is as follows. Involved in many cell functions, including pre-mRNA splicing, the aryl hydrocarbon receptor (AHR) pathway, F-actin organization and protein ubiquitination. Plays a role in the dynamic organization of the actin skeleton as a stabilizer of actin filaments by association with F-actin through Kelch repeats. Protects cells from cell death induced by actin destabilization. Functions as modifier of the AHR/Aryl hydrocarbon receptor pathway increasing the concentration of AHR available to activate transcription. In addition, functions as a negative regulator of BCR(KLHL20) E3 ubiquitin ligase complex to prevent ubiquitin-mediated proteolysis of PML and DAPK1, two tumor suppressors. Inhibits pre-mRNA splicing (in vitro). May play a role in mRNA nuclear export. In terms of biological role, (Microbial infection) Involved in the alternative splicing of influenza A virus M1 mRNA through interaction with HNRNPK, thereby facilitating the generation of viral M2 protein. The BTB and Kelch domains are required for splicing activity. Promotes export of viral M mRNA and RNP via its interaction with mRNA export factor ALYREF. This chain is Influenza virus NS1A-binding protein, found in Homo sapiens (Human).